The chain runs to 314 residues: tRNA dimethylallyltransferase (314 aa).

12–19 (GPTASGKT) contributes to the ATP binding site. Residue 14 to 19 (TASGKT) coordinates substrate. Interaction with substrate tRNA stretches follow at residues 37–40 (DSAL) and 162–166 (QRIIR).

Belongs to the IPP transferase family. As to quaternary structure, monomer. Mg(2+) serves as cofactor.

The catalysed reaction is adenosine(37) in tRNA + dimethylallyl diphosphate = N(6)-dimethylallyladenosine(37) in tRNA + diphosphate. Functionally, catalyzes the transfer of a dimethylallyl group onto the adenine at position 37 in tRNAs that read codons beginning with uridine, leading to the formation of N6-(dimethylallyl)adenosine (i(6)A). This is tRNA dimethylallyltransferase from Acinetobacter baumannii (strain SDF).